We begin with the raw amino-acid sequence, 527 residues long: Exodeoxyribonuclease 7 large subunit (527 aa).

Residues 499–527 (AGEEGAPPPAAPKKRASRPVVPTKQGSLF) form a disordered region.

The protein belongs to the XseA family. As to quaternary structure, heterooligomer composed of large and small subunits.

The protein resides in the cytoplasm. It carries out the reaction Exonucleolytic cleavage in either 5'- to 3'- or 3'- to 5'-direction to yield nucleoside 5'-phosphates.. Bidirectionally degrades single-stranded DNA into large acid-insoluble oligonucleotides, which are then degraded further into small acid-soluble oligonucleotides. This Sinorhizobium fredii (strain NBRC 101917 / NGR234) protein is Exodeoxyribonuclease 7 large subunit.